The chain runs to 249 residues: Metallo-beta-lactamase type 2 (249 aa).

An N-terminal signal peptide occupies residues 1–22 (MLKKIKISLILALGLTSLQAFG). The Zn(2+) site is built by His-98, His-100, Asp-102, His-161, and Cys-180. Substrate is bound at residue Lys-183. Residue His-222 participates in Zn(2+) binding.

The protein belongs to the metallo-beta-lactamase superfamily. Class-B beta-lactamase family. As to quaternary structure, monomer. Zn(2+) is required as a cofactor.

Its subcellular location is the periplasm. It catalyses the reaction a beta-lactam + H2O = a substituted beta-amino acid. With respect to regulation, inhibited by chelating agents such as EDTA, 1-10 phenanthroline and pyridine-2,6-dicarboxylic acid. In terms of biological role, confers resistance to the different beta-lactams antibiotics (penicillin, cephalosporin and carbapenem) via the hydrolysis of the beta-lactam ring. This Elizabethkingia meningoseptica (Chryseobacterium meningosepticum) protein is Metallo-beta-lactamase type 2 (blaB1).